Consider the following 160-residue polypeptide: Myosin catalytic light chain LC-1, mantle muscle (160 aa).

Xaa1 carries the blocked amino end (Xaa) modification. 3 consecutive EF-hand domains span residues 7 to 44 (DEIEEVREVFDLFDFWDGRDGDVDAAKVGDLLRCLGMN), 83 to 118 (TAADEFMEAFKTFDREGQGLISSAEIRNVLKMLGER), and 119 to 153 (ITEDQCNDIFTFCDIREDIDGNIKYEDLMKKVMAG).

Its function is as follows. In molluscan muscle, calcium regulation is associated with myosin rather than with actin. Muscle myosin contains two types of light chains: the catalytic light chain, essential for ATPase activity, and the regulatory light chain, a calcium-binding protein responsible for Ca(2+) dependent binding and Ca(2+) dependent Mg-ATPase activity. The polypeptide is Myosin catalytic light chain LC-1, mantle muscle (Todarodes pacificus (Japanese flying squid)).